The primary structure comprises 101 residues: Chaperone modulatory protein CbpM (101 aa).

The protein belongs to the CbpM family.

In terms of biological role, interacts with CbpA and inhibits both the DnaJ-like co-chaperone activity and the DNA binding activity of CbpA. Together with CbpA, modulates the activity of the DnaK chaperone system. Does not inhibit the co-chaperone activity of DnaJ. This Pseudomonas putida (strain ATCC 700007 / DSM 6899 / JCM 31910 / BCRC 17059 / LMG 24140 / F1) protein is Chaperone modulatory protein CbpM.